The following is a 59-amino-acid chain: Photosystem II reaction center protein K (59 aa).

Residues 1-22 constitute a propeptide that is removed on maturation; that stretch reads MLNIFSLICLSSALHSSSFFFA. A helical transmembrane segment spans residues 38-58; the sequence is MPVIPVLFFLLALVWQAAVSF.

It belongs to the PsbK family. In terms of assembly, PSII is composed of 1 copy each of membrane proteins PsbA, PsbB, PsbC, PsbD, PsbE, PsbF, PsbH, PsbI, PsbJ, PsbK, PsbL, PsbM, PsbT, PsbX, PsbY, PsbZ, Psb30/Ycf12, at least 3 peripheral proteins of the oxygen-evolving complex and a large number of cofactors. It forms dimeric complexes.

The protein localises to the plastid. Its subcellular location is the chloroplast thylakoid membrane. Its function is as follows. One of the components of the core complex of photosystem II (PSII). PSII is a light-driven water:plastoquinone oxidoreductase that uses light energy to abstract electrons from H(2)O, generating O(2) and a proton gradient subsequently used for ATP formation. It consists of a core antenna complex that captures photons, and an electron transfer chain that converts photonic excitation into a charge separation. This Piper cenocladum (Ant piper) protein is Photosystem II reaction center protein K.